Consider the following 289-residue polypeptide: MFFEIALIGTTASGKTYIANTLAREFNAVVLSLDSLCVYKEINIASAKPSQDDLASIKYFGVNLLSVNEHFNVELFIREYQKAKEFALARNLPLIIVGGTGFYLKTMIDGLSEKTLESKSSLNNDEIYALLLNIDPNYKIEKNDTYRLKKWLGIYEQTREIPSEFLKRTQKTGVLKDIEIYELAWDKEILKKRIKTRTKEMLDNGLLDEAKILFSKFDHKLKALNSIGLKECKEYLDGEISFKELENLITIHTTQLAKRQRTFNKKFQSKALEFDKALATLRMKFSIEK.

G9 to T16 is an ATP binding site. T11–T16 provides a ligand contact to substrate. The interaction with substrate tRNA stretch occupies residues D34–C37.

Belongs to the IPP transferase family. In terms of assembly, monomer. Requires Mg(2+) as cofactor.

It catalyses the reaction adenosine(37) in tRNA + dimethylallyl diphosphate = N(6)-dimethylallyladenosine(37) in tRNA + diphosphate. In terms of biological role, catalyzes the transfer of a dimethylallyl group onto the adenine at position 37 in tRNAs that read codons beginning with uridine, leading to the formation of N6-(dimethylallyl)adenosine (i(6)A). In Campylobacter jejuni (strain RM1221), this protein is tRNA dimethylallyltransferase.